The sequence spans 205 residues: Small ribosomal subunit protein uS4 (205 aa).

The interval 18 to 46 (NIWGRPKSPVNRREYGPGQHGQRRKGKLS) is disordered. Residues 94–154 (RRLDAVVYRA…EASKQLAHVL (61 aa)) enclose the S4 RNA-binding domain.

Belongs to the universal ribosomal protein uS4 family. As to quaternary structure, part of the 30S ribosomal subunit. Contacts protein S5. The interaction surface between S4 and S5 is involved in control of translational fidelity.

One of the primary rRNA binding proteins, it binds directly to 16S rRNA where it nucleates assembly of the body of the 30S subunit. In terms of biological role, with S5 and S12 plays an important role in translational accuracy. The chain is Small ribosomal subunit protein uS4 from Bradyrhizobium diazoefficiens (strain JCM 10833 / BCRC 13528 / IAM 13628 / NBRC 14792 / USDA 110).